The sequence spans 404 residues: Cysteine desulfurase IscS (404 aa).

Residues A75–T76, N155, Q183, and S203–H205 contribute to the pyridoxal 5'-phosphate site. K206 carries the N6-(pyridoxal phosphate)lysine modification. Position 243 (T243) interacts with pyridoxal 5'-phosphate. The active-site Cysteine persulfide intermediate is the C328. C328 provides a ligand contact to [2Fe-2S] cluster.

Belongs to the class-V pyridoxal-phosphate-dependent aminotransferase family. NifS/IscS subfamily. Homodimer. Forms a heterotetramer with IscU, interacts with other sulfur acceptors. Requires pyridoxal 5'-phosphate as cofactor.

It localises to the cytoplasm. The catalysed reaction is (sulfur carrier)-H + L-cysteine = (sulfur carrier)-SH + L-alanine. Its pathway is cofactor biosynthesis; iron-sulfur cluster biosynthesis. In terms of biological role, master enzyme that delivers sulfur to a number of partners involved in Fe-S cluster assembly, tRNA modification or cofactor biosynthesis. Catalyzes the removal of elemental sulfur atoms from cysteine to produce alanine. Functions as a sulfur delivery protein for Fe-S cluster synthesis onto IscU, an Fe-S scaffold assembly protein, as well as other S acceptor proteins. The sequence is that of Cysteine desulfurase IscS from Pseudomonas entomophila (strain L48).